The sequence spans 623 residues: Leucine aminopeptidase 2 (623 aa).

Residues glutamine 136–glutamine 138 and proline 273–glutamate 278 contribute to the a peptide site. Histidine 302 is a Zn(2+) binding site. The active-site Proton acceptor is glutamate 303. Positions 306 and 325 each coordinate Zn(2+). Tyrosine 390 serves as the catalytic Proton donor.

The protein belongs to the peptidase M1 family. Zn(2+) is required as a cofactor.

It localises to the cytoplasm. Its subcellular location is the nucleus. The enzyme catalyses an epoxide + H2O = an ethanediol. Functionally, aminopeptidase that preferentially cleaves di- and tripeptides. Also has low epoxide hydrolase activity (in vitro). Can hydrolyze the epoxide leukotriene LTA(4) but it forms preferentially 5,6-dihydroxy-7,9,11,14-eicosatetraenoic acid rather than the cytokine leukotriene B(4) as the product compared to the homologous mammalian enzyme (in vitro). The polypeptide is Leucine aminopeptidase 2 (Phaeosphaeria nodorum (strain SN15 / ATCC MYA-4574 / FGSC 10173) (Glume blotch fungus)).